Here is a 125-residue protein sequence, read N- to C-terminus: Secreted RxLR effector protein 55 (125 aa).

Residues 1–21 (MAASRSSITTLLLLIVAVALG) form the signal peptide. A RxLR motif is present at residues 35–38 (RQLR). The span at 51–87 (ESATSSSSSSALDHKSSAPGEATNASETEHSAASTAS) shows a compositional bias: low complexity. Residues 51–96 (ESATSSSSSSALDHKSSAPGEATNASETEHSAASTASEPKHEGPTM) are disordered. Asparagine 74 carries an N-linked (GlcNAc...) asparagine glycan. A helical transmembrane segment spans residues 99–119 (FVGPAAAGVLAILLIGAVIAF).

It belongs to the RxLR effector family.

Its subcellular location is the secreted. It localises to the host cell membrane. In terms of biological role, effector that acts as a broad suppressor of cell death to interrupt plant immunity. Inhibits cell death induced by cell death-inducing proteins, including the PAMP elicitor INF1 from P.infestans. The sequence is that of Secreted RxLR effector protein 55 from Plasmopara viticola (Downy mildew of grapevine).